Reading from the N-terminus, the 485-residue chain is Putative ATP-dependent RNA helicase ste13 (485 aa).

A disordered region spans residues 16–38 (DRESFKGQMKAQPVDMRPKTEDV). The Q motif signature appears at 44–72 (TEFEDYYLKRELLMGIFEAGFERPSPIQE). The 171-residue stretch at 75–245 (IPIALSGRDI…DKHLNKPYEI (171 aa)) folds into the Helicase ATP-binding domain. An ATP-binding site is contributed by 88-95 (AKNGTGKT). A DEAD box motif is present at residues 193–196 (DEAD). One can recognise a Helicase C-terminal domain in the interval 255 to 415 (GVTQYYAFVD…PIPPSIDPSL (161 aa)). Positions 437 to 485 (LAAQQAKGQEGYHNRPNNNRGGHPRGGGNRGGYRQSNRQPRYRGQQKAD) are disordered.

Belongs to the DEAD box helicase family. DDX6/DHH1 subfamily.

It localises to the cytoplasm. The protein resides in the P-body. The catalysed reaction is ATP + H2O = ADP + phosphate + H(+). Functionally, ATP-dependent RNA helicase involved in mRNA turnover, and more specifically in mRNA decapping. Is involved in G1/S DNA-damage checkpoint recovery, probably through the regulation of the translational status of a subset of mRNAs. May also have a role in translation and mRNA nuclear export. This chain is Putative ATP-dependent RNA helicase ste13 (ste13), found in Schizosaccharomyces pombe (strain 972 / ATCC 24843) (Fission yeast).